Reading from the N-terminus, the 122-residue chain is Small ribosomal subunit protein uS13 (122 aa).

A disordered region spans residues 97–122 (PVRGQRTHTNAKTRKGRSRLPIAGKK).

Belongs to the universal ribosomal protein uS13 family. As to quaternary structure, part of the 30S ribosomal subunit. Forms a loose heterodimer with protein S19. Forms two bridges to the 50S subunit in the 70S ribosome.

Its function is as follows. Located at the top of the head of the 30S subunit, it contacts several helices of the 16S rRNA. In the 70S ribosome it contacts the 23S rRNA (bridge B1a) and protein L5 of the 50S subunit (bridge B1b), connecting the 2 subunits; these bridges are implicated in subunit movement. Contacts the tRNAs in the A and P-sites. The chain is Small ribosomal subunit protein uS13 from Wolbachia pipientis wMel.